The sequence spans 341 residues: 33 kDa chaperonin (341 aa).

2 cysteine pairs are disulfide-bonded: Cys-245–Cys-247 and Cys-278–Cys-281.

The protein belongs to the HSP33 family. Post-translationally, under oxidizing conditions two disulfide bonds are formed involving the reactive cysteines. Under reducing conditions zinc is bound to the reactive cysteines and the protein is inactive.

The protein resides in the cytoplasm. Functionally, redox regulated molecular chaperone. Protects both thermally unfolding and oxidatively damaged proteins from irreversible aggregation. Plays an important role in the bacterial defense system toward oxidative stress. This chain is 33 kDa chaperonin, found in Thermus thermophilus (strain ATCC BAA-163 / DSM 7039 / HB27).